The primary structure comprises 509 residues: Ankyrin repeat domain-containing protein 13C (509 aa).

Residues 1-19 (MTGEKIRSLHRDQKPSKDE) show a composition bias toward basic and acidic residues. Positions 1 to 42 (MTGEKIRSLHRDQKPSKDEDLLEPDEEATAGGTFTRTGKLKN) are disordered. ANK repeat units follow at residues 79–110 (DAYFPVHECVFKGDIRRLSSLIRSHSIGQKDN), 111–140 (HGNTPLHLAVMLGNKECAHLLLAHNAPVKV), and 144–173 (QGWSPLAEAISYGDRQMITALLRKLKQQSR).

It localises to the endoplasmic reticulum membrane. Functionally, acts as a molecular chaperone for G protein-coupled receptors, regulating their biogenesis and exit from the ER. The sequence is that of Ankyrin repeat domain-containing protein 13C (ankrd13c) from Xenopus tropicalis (Western clawed frog).